The sequence spans 136 residues: Nucleoside diphosphate kinase (136 aa).

Residues Lys-10, Phe-58, Arg-86, Thr-92, Arg-104, and Asn-114 each contribute to the ATP site. His-117 (pros-phosphohistidine intermediate) is an active-site residue.

The protein belongs to the NDK family. Homotetramer. Mg(2+) serves as cofactor.

Its subcellular location is the cytoplasm. The catalysed reaction is a 2'-deoxyribonucleoside 5'-diphosphate + ATP = a 2'-deoxyribonucleoside 5'-triphosphate + ADP. It catalyses the reaction a ribonucleoside 5'-diphosphate + ATP = a ribonucleoside 5'-triphosphate + ADP. Major role in the synthesis of nucleoside triphosphates other than ATP. The ATP gamma phosphate is transferred to the NDP beta phosphate via a ping-pong mechanism, using a phosphorylated active-site intermediate. The chain is Nucleoside diphosphate kinase from Mycobacterium leprae (strain TN).